The primary structure comprises 218 residues: MGKGNNMIPNQHYHKWWQRHVKTWFNQPARKVRRHANRVKKAKAVFPRPASGALRPVVRCPTIRYHTKLRAGRGFTLEELKGAGIGANFAKTIGIAVDRRRKNKSLESRQRNIQRLKEYRSKLILFPINEKKIRAGESSLEECKLATQLKGPVLPIKNEQPAVVEFREVTKDEKKFKAFATLRKARTDARLVGIRAKRAKEAAESEDAAKGDPKKAKK.

The interval 196 to 218 (AKRAKEAAESEDAAKGDPKKAKK) is disordered. Positions 199–218 (AKEAAESEDAAKGDPKKAKK) are enriched in basic and acidic residues.

This sequence belongs to the eukaryotic ribosomal protein eL13 family. Component of the 60S large ribosomal subunit (LSU).

It is found in the cytoplasm. Functionally, component of the ribosome, a large ribonucleoprotein complex responsible for the synthesis of proteins in the cell. The small ribosomal subunit (SSU) binds messenger RNAs (mRNAs) and translates the encoded message by selecting cognate aminoacyl-transfer RNA (tRNA) molecules. The large subunit (LSU) contains the ribosomal catalytic site termed the peptidyl transferase center (PTC), which catalyzes the formation of peptide bonds, thereby polymerizing the amino acids delivered by tRNAs into a polypeptide chain. The nascent polypeptides leave the ribosome through a tunnel in the LSU and interact with protein factors that function in enzymatic processing, targeting, and the membrane insertion of nascent chains at the exit of the ribosomal tunnel. As part of the LSU, it is probably required for its formation and the maturation of rRNAs. The protein is Large ribosomal subunit protein eL13 (RpL13) of Drosophila melanogaster (Fruit fly).